A 466-amino-acid chain; its full sequence is Peptidoglycan-N-acetylglucosamine deacetylase PgdA (466 aa).

Over 1–5 the chain is Cytoplasmic; it reads MKIRW. A helical transmembrane segment spans residues 6–26; sequence IRLSLVAILIIAVVFIGVIGF. The Extracellular portion of the chain corresponds to 27 to 466; the sequence is QKYQFSKSRN…FDKTDSRMVK (440 aa). The NodB homology domain occupies 266-440; sequence KRIALTFDDG…KLKSQGYEFV (175 aa). Aspartate 273 acts as the Proton acceptor in catalysis. Aspartate 274, histidine 324, and histidine 328 together coordinate Zn(2+). Tyrosine 365 is a substrate binding site. Histidine 415 serves as the catalytic Proton donor.

Homodimer. Interacts (via transmembrane domain) with PbpA1 (via transmembrane domain); the interaction is important for the peptidoglycan N-deacetylase function of this protein. Zn(2+) serves as cofactor.

The protein localises to the cell membrane. It is found in the secreted. It localises to the cell wall. It carries out the reaction peptidoglycan-N-acetyl-D-glucosamine + H2O = peptidoglycan-D-glucosamine + acetate.. Its function is as follows. Catalyzes the deacetylation of N-acetylglucosamine (GlcNAc) residues in peptidoglycan (PG). Also deacetylates N-acetylated PG. Does not deacetylate N-acetylmuramic acid. Confers host lysozyme resistance. Critical for virulence and escape from innate immune response of the host. Required for intracellular survival of bacteria in macrophages of the host. Required for successful host colonization. Controls the production of inflammatory mediators in the bone marrow derived macrophages (BMMs) of the infected mouse. Suppresses Toll-like receptor 2 (TLR2)-dependent secretion of interleukin 6 (IL-6) and interferon-beta (IFN-beta) in the macrophages of the infected mouse. May decrease accessibility of pattern recognition receptors (PRRs) such as nucleotide-binding oligomerization domain protein (NOD) 1 of the host to the bacterial cell wall components. Protects cells from autolysis induced by lysozyme or by other autolysis-inducing agents. This Listeria monocytogenes serotype 1/2a (strain 10403S) protein is Peptidoglycan-N-acetylglucosamine deacetylase PgdA.